The primary structure comprises 549 residues: Plant intracellular Ras-group-related LRR protein 4 (549 aa).

The segment covering 119–140 has biased composition (low complexity); it reads SPSSNGSVSSRPPLPPATTTAA. A disordered region spans residues 119–167; the sequence is SPSSNGSVSSRPPLPPATTTAARSDSQSSLNFSERAPVRPKDMVSRDDS. The segment covering 141 to 150 has biased composition (polar residues); the sequence is RSDSQSSLNF. The segment covering 154–167 has biased composition (basic and acidic residues); it reads APVRPKDMVSRDDS. Ser167 is subject to Phosphoserine. LRR repeat units lie at residues 245–268, 269–291, 293–313, 314–337, 339–360, 362–383, 384–406, 407–430, 432–454, 455–476, and 478–500; these read LSSL…IGGL, SSLT…IGEL, NLVY…AFSR, LVRL…IGSL, SLKK…IGGC, SLIE…IGKI, TTLE…MSSL, ASLK…CFAT, LVKL…IGNL, EMLE…SFKM, and TKLR…IAEK. The GVYW; degenerate motif lies at 501–508; sequence GPQAVVQY.

It belongs to the SHOC2 family. Widely expressed.

Functionally, leucine-rich repeat protein that likely mediates protein interactions, possibly in the context of signal transduction. The chain is Plant intracellular Ras-group-related LRR protein 4 (PIRL4) from Arabidopsis thaliana (Mouse-ear cress).